The chain runs to 207 residues: MTKVAVLKQDGSQAAELELNDAVFAIEPNNAVITDAVLMQRASMRQGTHAVKNRSAVSGGGRKPWKQKGTGRARAGSIREPQFRGGGIVFGPTPRSYAYRINRKAYQLALKSVLSQKVAEGKLVVVDALSFEAPKTQDFKKVLANLSVDTKTLVVVDEDNENAILSARNLTNVQVMTTKGINVLDVVNADKLVIVQSSIEEIQGGLA.

Residues 48 to 75 (THAVKNRSAVSGGGRKPWKQKGTGRARA) are disordered.

Belongs to the universal ribosomal protein uL4 family. As to quaternary structure, part of the 50S ribosomal subunit.

One of the primary rRNA binding proteins, this protein initially binds near the 5'-end of the 23S rRNA. It is important during the early stages of 50S assembly. It makes multiple contacts with different domains of the 23S rRNA in the assembled 50S subunit and ribosome. Its function is as follows. Forms part of the polypeptide exit tunnel. The chain is Large ribosomal subunit protein uL4 from Leuconostoc citreum (strain KM20).